A 455-amino-acid chain; its full sequence is MATRIASFIGISTVASLALANGINVPDTISRDVIILGAGSSGTYAAIRLKDEGKTVAVVERNDYLGGHGETYYTEDNTPLNFGVEGFFNTSVTRNYLERLQVPYGRRNPAPAHEDYVNLNTGQRTEYPPGQLQDREAFAKWVDAISQFGFLDDGVYRITEPVPEDLIIPFADFVKKYHLEDAVYALFSHTSGDVLEMITLYVIQYIGIPHAAALNEGYVRPIEGIAALYKSAGKELGSDVLLKTTPESVQRSKDGVEVTVRSADGTKTLLKGKQLLVTIPPLLENLHGFPLSDQESRIFSKWQYHQYWAALVNDTGLPDDVNIVNVDTERLYGVPEEPFIWRLDNHWAPGYHNIKLVGGSDFGEDEAKAYMYEKLDLLHEEGTYSTHKPEIVKFASHTPVTMFVSAEEIRGGFYRQLYELQGLNSTFWTGATWASDYSTLLWGYTDEVLDQMASS.

A signal peptide spans 1-20; the sequence is MATRIASFIGISTVASLALA.

Belongs to the beta-cyclopiazonate dehydrogenase family. The cofactor is FAD.

It carries out the reaction beta-cyclopiazonate + A = alpha-cyclopiazonate + AH2. Its function is as follows. Beta-cyclopiazonate dehydrogenase involved in the synthesis of the fungal neurotoxin alpha-cyclopiazonic acid (CPA). CpaO carries out the dehydrogenation of beta-CPA to yield an unstable enimine product, which is captured by intramolecular cyclization to create the pentacyclic fused scaffold of alpha-cyclopiazonate. This chain is Beta-cyclopiazonate dehydrogenase, found in Aspergillus flavus (strain ATCC 200026 / FGSC A1120 / IAM 13836 / NRRL 3357 / JCM 12722 / SRRC 167).